The chain runs to 230 residues: 5'-methylthioadenosine/S-adenosylhomocysteine nucleosidase (230 aa).

Glu-12 serves as the catalytic Proton acceptor. Residues Gly-78, Ile-153, and 174–175 contribute to the substrate site; that span reads ME. Asp-198 acts as the Proton donor in catalysis.

Belongs to the PNP/UDP phosphorylase family. MtnN subfamily.

It carries out the reaction S-adenosyl-L-homocysteine + H2O = S-(5-deoxy-D-ribos-5-yl)-L-homocysteine + adenine. The catalysed reaction is S-methyl-5'-thioadenosine + H2O = 5-(methylsulfanyl)-D-ribose + adenine. The enzyme catalyses 5'-deoxyadenosine + H2O = 5-deoxy-D-ribose + adenine. It participates in amino-acid biosynthesis; L-methionine biosynthesis via salvage pathway; S-methyl-5-thio-alpha-D-ribose 1-phosphate from S-methyl-5'-thioadenosine (hydrolase route): step 1/2. In terms of biological role, catalyzes the irreversible cleavage of the glycosidic bond in both 5'-methylthioadenosine (MTA) and S-adenosylhomocysteine (SAH/AdoHcy) to adenine and the corresponding thioribose, 5'-methylthioribose and S-ribosylhomocysteine, respectively. Also cleaves 5'-deoxyadenosine, a toxic by-product of radical S-adenosylmethionine (SAM) enzymes, into 5-deoxyribose and adenine. The chain is 5'-methylthioadenosine/S-adenosylhomocysteine nucleosidase from Shewanella loihica (strain ATCC BAA-1088 / PV-4).